Here is an 88-residue protein sequence, read N- to C-terminus: Small cysteine-rich outer membrane protein OmcA (88 aa).

Positions 1–18 are cleaved as a signal peptide; the sequence is MKKTALLAALCSVVSLSS. A lipid anchor (N-palmitoyl cysteine) is attached at cysteine 19. Cysteine 19 is lipidated: S-diacylglycerol cysteine.

Part of a disulfide cross-linked outer membrane complex (COMC) composed of the major outer membrane porin (MOMP), the small cysteine-rich protein (OmcA) and the large cysteine-rich periplasmic protein (OmcB).

It is found in the cell outer membrane. In elementary bodies (EBs, the infectious stage, which is able to survive outside the host cell) provides the structural integrity of the outer envelope through disulfide cross-links with the large cysteine-rich periplasmic protein and the major outer membrane porin. It has been described in publications as the Sarkosyl-insoluble COMC (Chlamydia outer membrane complex), and serves as the functional equivalent of peptidoglycan. This chain is Small cysteine-rich outer membrane protein OmcA (omcA), found in Chlamydia trachomatis serovar B (strain Jali20/OT).